The primary structure comprises 190 residues: Small ribosomal subunit protein eS7x (190 aa).

Residue methionine 1 is modified to N-acetylmethionine. A coiled-coil region spans residues 17 to 50; that stretch reads TECEEQVAQALFDLENTNQELKSELKDLYINQAV.

The protein belongs to the eukaryotic ribosomal protein eS7 family.

This chain is Small ribosomal subunit protein eS7x (RPS7C), found in Arabidopsis thaliana (Mouse-ear cress).